The chain runs to 381 residues: Putative acetyl-CoA C-acetyltransferase VraB (381 aa).

Cys-86 functions as the Acyl-thioester intermediate in the catalytic mechanism. Residue His-338 is the Proton acceptor of the active site.

This sequence belongs to the thiolase-like superfamily. Thiolase family.

This is Putative acetyl-CoA C-acetyltransferase VraB (vraB) from Staphylococcus haemolyticus (strain JCSC1435).